Consider the following 364-residue polypeptide: MISIVLELFQNLCCCRGFSDATIRVNDKRYRIQRLLGEGGMSFVYLVQLSKNSLIIDNGIATPELYALKKIICPSVESISNGMREIENYKRFQSPYVIKSIDSQVMQEKDGSKTIYIVLPYYSLGSLQDSINRRLLEGTFVSEAECVRIMLGVTRGLLCLHDPASRQDNATSRVNVDAVSMTYSDETAMLLEDTPLEMDMLSSNSAGSIAYAHRDITPSNILFSSDGLPVIGDLGSCSQADITIENRHQLSELQEWVNDNCTLPYTPPELLNLKLNQVLSSKVDIWSLGCTFYTLMFGISPFEREEQIHGASLTYAINTGKYSFPRNSRFSEGLLSVIKKCIQVDPIQRPTTSQLLNLLQDLDT.

3 S-palmitoyl cysteine lipidation sites follow: Cys-13, Cys-14, and Cys-15. Residues 30–364 (YRIQRLLGEG…LLNLLQDLDT (335 aa)) enclose the Protein kinase domain. Residues 36–44 (LGEGGMSFV) and Lys-69 each bind ATP. The active-site Proton acceptor is the Asp-215.

It belongs to the protein kinase superfamily. Ser/Thr protein kinase family.

It localises to the vacuole membrane. It catalyses the reaction L-seryl-[protein] + ATP = O-phospho-L-seryl-[protein] + ADP + H(+). The enzyme catalyses L-threonyl-[protein] + ATP = O-phospho-L-threonyl-[protein] + ADP + H(+). Serine/threonine-protein kinase involved in vacuolar processing and morphology. The protein is Serine/threonine-protein kinase ENV7 (ENV7) of Saccharomyces cerevisiae (strain ATCC 204508 / S288c) (Baker's yeast).